Reading from the N-terminus, the 507-residue chain is Sugar transport protein 8 (507 aa).

Topologically, residues 1 to 21 (MAVVISSNGNSKSFDAKMTVY) are cytoplasmic. Transmembrane regions (helical) follow at residues 22–42 (VFIC…DIGI), 79–99 (FLQL…FFAS), 116–136 (IFFL…MLII), 139–159 (ILLG…LSEI), 166–186 (GGLN…ANIV), 200–220 (IALG…LLIC), 281–301 (FVIG…AIMF), 319–339 (LSAV…IFLV), 346–366 (FLLL…GIIL), 382–402 (LVVV…WGPL), 419–439 (GFAL…QAFL), and 448–468 (GIFF…LFFV). The Cytoplasmic segment spans residues 469 to 507 (PETKGVSIDDMRDSVWKLHWYWKRFMLEEDEHDVEKRTD).

Belongs to the major facilitator superfamily. Sugar transporter (TC 2.A.1.1) family.

Its subcellular location is the membrane. In terms of biological role, mediates an active uptake of hexoses, probably by sugar/hydrogen symport. The protein is Sugar transport protein 8 (STP8) of Arabidopsis thaliana (Mouse-ear cress).